Reading from the N-terminus, the 751-residue chain is Semaphorin-3C (751 aa).

The first 21 residues, methionine 1–glycine 21, serve as a signal peptide directing secretion. Positions arginine 28–leucine 511 constitute a Sema domain. The N-linked (GlcNAc...) asparagine glycan is linked to asparagine 81. Cysteine 101 and cysteine 112 are oxidised to a cystine. An N-linked (GlcNAc...) asparagine glycan is attached at asparagine 123. The cysteines at positions 130 and 139 are disulfide-linked. 2 N-linked (GlcNAc...) asparagine glycosylation sites follow: asparagine 252 and asparagine 268. 2 disulfide bridges follow: cysteine 266–cysteine 378 and cysteine 290–cysteine 338. Residue asparagine 465 is glycosylated (N-linked (GlcNAc...) asparagine). A disulfide bridge links cysteine 514 with cysteine 532. In terms of domain architecture, Ig-like C2-type spans alanine 571–alanine 655. N-linked (GlcNAc...) asparagine glycosylation is found at asparagine 585 and asparagine 586. A disulfide bond links cysteine 592 and cysteine 643. Positions threonine 712–lysine 731 are enriched in basic and acidic residues. The disordered stretch occupies residues threonine 712–serine 751.

It belongs to the semaphorin family. Interacts with PLXND1.

The protein localises to the secreted. Binds to plexin family members and plays an important role in the regulation of developmental processes. Required for normal cardiovascular development during embryogenesis. Functions as attractant for growing axons, and thereby plays an important role in axon growth and axon guidance. The chain is Semaphorin-3C (SEMA3C) from Pongo abelii (Sumatran orangutan).